A 323-amino-acid polypeptide reads, in one-letter code: Annexin A3 (323 aa).

A2 is modified (N-acetylalanine). 4 Annexin repeats span residues 18–89 (FSPS…ALVT), 90–161 (PPAV…TLAD), 173–245 (HLAK…AIVN), and 249–320 (NTPA…KICG). T267 carries the post-translational modification Phosphothreonine.

This sequence belongs to the annexin family.

Functionally, inhibitor of phospholipase A2, also possesses anti-coagulant properties. Also cleaves the cyclic bond of inositol 1,2-cyclic phosphate to form inositol 1-phosphate. The polypeptide is Annexin A3 (ANXA3) (Homo sapiens (Human)).